The chain runs to 488 residues: DNA polymerase II small subunit (488 aa).

Belongs to the DNA polymerase delta/II small subunit family. As to quaternary structure, heterodimer of a large subunit and a small subunit.

It catalyses the reaction DNA(n) + a 2'-deoxyribonucleoside 5'-triphosphate = DNA(n+1) + diphosphate. The enzyme catalyses Exonucleolytic cleavage in the 3'- to 5'-direction to yield nucleoside 5'-phosphates.. Its function is as follows. Possesses two activities: a DNA synthesis (polymerase) and an exonucleolytic activity that degrades single-stranded DNA in the 3' to 5' direction. Has a template-primer preference which is characteristic of a replicative DNA polymerase. The protein is DNA polymerase II small subunit (polB) of Archaeoglobus fulgidus (strain ATCC 49558 / DSM 4304 / JCM 9628 / NBRC 100126 / VC-16).